A 350-amino-acid chain; its full sequence is Small ribosomal subunit biogenesis GTPase RsgA (350 aa).

Residues 1 to 17 are compositionally biased toward polar residues; it reads MSKNKLSKGQQRRVNAN. Residues 1 to 33 are disordered; it reads MSKNKLSKGQQRRVNANHQRRLKTSKEKPDYDD. One can recognise a CP-type G domain in the interval 104-273; sequence TSVLTRPDFY…VIDSPGVREF (170 aa). Residues 160-163 and 214-222 each bind GTP; these read NKID and GQSGVGKSS. Zn(2+)-binding residues include C297, C302, H304, and C310.

Belongs to the TRAFAC class YlqF/YawG GTPase family. RsgA subfamily. As to quaternary structure, monomer. Associates with 30S ribosomal subunit, binds 16S rRNA. The cofactor is Zn(2+).

It is found in the cytoplasm. Its function is as follows. One of several proteins that assist in the late maturation steps of the functional core of the 30S ribosomal subunit. Helps release RbfA from mature subunits. May play a role in the assembly of ribosomal proteins into the subunit. Circularly permuted GTPase that catalyzes slow GTP hydrolysis, GTPase activity is stimulated by the 30S ribosomal subunit. This chain is Small ribosomal subunit biogenesis GTPase RsgA, found in Escherichia coli O6:H1 (strain CFT073 / ATCC 700928 / UPEC).